Here is a 466-residue protein sequence, read N- to C-terminus: Argininosuccinate lyase (466 aa).

Belongs to the lyase 1 family. Argininosuccinate lyase subfamily.

The protein resides in the cytoplasm. The enzyme catalyses 2-(N(omega)-L-arginino)succinate = fumarate + L-arginine. The protein operates within amino-acid biosynthesis; L-arginine biosynthesis; L-arginine from L-ornithine and carbamoyl phosphate: step 3/3. The polypeptide is Argininosuccinate lyase (Microcystis aeruginosa (strain NIES-843 / IAM M-2473)).